A 355-amino-acid polypeptide reads, in one-letter code: Chorismate synthase (355 aa).

2 residues coordinate NADP(+): R44 and R49. FMN-binding positions include H121–S123, G277, K292–S296, and R319.

Belongs to the chorismate synthase family. The cofactor is FMNH2.

The catalysed reaction is 5-O-(1-carboxyvinyl)-3-phosphoshikimate = chorismate + phosphate. The protein operates within metabolic intermediate biosynthesis; chorismate biosynthesis; chorismate from D-erythrose 4-phosphate and phosphoenolpyruvate: step 7/7. Its function is as follows. Catalyzes the anti-1,4-elimination of the C-3 phosphate and the C-6 proR hydrogen from 5-enolpyruvylshikimate-3-phosphate (EPSP) to yield chorismate, which is the branch point compound that serves as the starting substrate for the three terminal pathways of aromatic amino acid biosynthesis. This reaction introduces a second double bond into the aromatic ring system. In Thermococcus kodakarensis (strain ATCC BAA-918 / JCM 12380 / KOD1) (Pyrococcus kodakaraensis (strain KOD1)), this protein is Chorismate synthase.